A 418-amino-acid polypeptide reads, in one-letter code: Putative ion-transport protein YfeO (418 aa).

A run of 12 helical transmembrane segments spans residues 10 to 30 (LLLSLPAVAIGIASSLILIVV), 54 to 74 (DSPFWIIAILTLTGIAVGLVI), 99 to 119 (ALPGLIVALILGLAGGVSLGP), 120 to 140 (EHPIMTVNIALAVAIGARLLP), 149 to 169 (ILASAGTIGALFGTPVAAALI), 186 to 206 (LFAPLMAAAAGALTTGLFFHP), 223 to 243 (ILSGAIVAAIAIAAGMIAVWC), 258 to 278 (VLMLGVGGFILGILGVIAGPV), 300 to 320 (DYFLLAVIKLAALVVAAASGF), 322 to 342 (GGRIFPAVFVGVALGLMLHEH), 343 to 363 (VPAVPAAITVSCAILGIVLVV), and 371 to 391 (LFMAAVVVPNTTLLPLLCIVM).

This sequence belongs to the chloride channel (TC 2.A.49) family.

It localises to the cell membrane. This is Putative ion-transport protein YfeO from Escherichia coli O7:K1 (strain IAI39 / ExPEC).